Reading from the N-terminus, the 469-residue chain is Bifunctional protein GlmU (469 aa).

Residues 1 to 237 (MTTNRKFAIA…SHEVLGVNTR (237 aa)) form a pyrophosphorylase region. UDP-N-acetyl-alpha-D-glucosamine contacts are provided by residues 12–15 (LAAG), K26, Q78, 83–84 (GT), 105–107 (SGD), G144, E162, N177, and N235. D107 contacts Mg(2+). A Mg(2+)-binding site is contributed by N235. Residues 238-258 (QDLASLDAHLRLQKCQQLMSA) are linker. Residues 259–469 (GVSIFKPETC…KKRAEQKKKK (211 aa)) form an N-acetyltransferase region. 2 residues coordinate UDP-N-acetyl-alpha-D-glucosamine: R341 and K359. H371 functions as the Proton acceptor in the catalytic mechanism. 2 residues coordinate UDP-N-acetyl-alpha-D-glucosamine: Y374 and N385. Acetyl-CoA contacts are provided by residues A388, 394 to 395 (NY), S413, A431, and R448.

The protein in the N-terminal section; belongs to the N-acetylglucosamine-1-phosphate uridyltransferase family. In the C-terminal section; belongs to the transferase hexapeptide repeat family. As to quaternary structure, homotrimer. The cofactor is Mg(2+).

It localises to the cytoplasm. It carries out the reaction alpha-D-glucosamine 1-phosphate + acetyl-CoA = N-acetyl-alpha-D-glucosamine 1-phosphate + CoA + H(+). The enzyme catalyses N-acetyl-alpha-D-glucosamine 1-phosphate + UTP + H(+) = UDP-N-acetyl-alpha-D-glucosamine + diphosphate. It participates in nucleotide-sugar biosynthesis; UDP-N-acetyl-alpha-D-glucosamine biosynthesis; N-acetyl-alpha-D-glucosamine 1-phosphate from alpha-D-glucosamine 6-phosphate (route II): step 2/2. Its pathway is nucleotide-sugar biosynthesis; UDP-N-acetyl-alpha-D-glucosamine biosynthesis; UDP-N-acetyl-alpha-D-glucosamine from N-acetyl-alpha-D-glucosamine 1-phosphate: step 1/1. The protein operates within bacterial outer membrane biogenesis; LPS lipid A biosynthesis. Functionally, catalyzes the last two sequential reactions in the de novo biosynthetic pathway for UDP-N-acetylglucosamine (UDP-GlcNAc). The C-terminal domain catalyzes the transfer of acetyl group from acetyl coenzyme A to glucosamine-1-phosphate (GlcN-1-P) to produce N-acetylglucosamine-1-phosphate (GlcNAc-1-P), which is converted into UDP-GlcNAc by the transfer of uridine 5-monophosphate (from uridine 5-triphosphate), a reaction catalyzed by the N-terminal domain. The polypeptide is Bifunctional protein GlmU (Koribacter versatilis (strain Ellin345)).